The chain runs to 223 residues: Phosphoribosylformylglycinamidine synthase subunit PurQ (223 aa).

The 222-residue stretch at 2 to 223 (KFAVLKFPGS…MVNSWREQNV (222 aa)) folds into the Glutamine amidotransferase type-1 domain. Catalysis depends on Cys85, which acts as the Nucleophile. Catalysis depends on residues His193 and Glu195.

In terms of assembly, part of the FGAM synthase complex composed of 1 PurL, 1 PurQ and 2 PurS subunits.

The protein resides in the cytoplasm. The catalysed reaction is N(2)-formyl-N(1)-(5-phospho-beta-D-ribosyl)glycinamide + L-glutamine + ATP + H2O = 2-formamido-N(1)-(5-O-phospho-beta-D-ribosyl)acetamidine + L-glutamate + ADP + phosphate + H(+). It carries out the reaction L-glutamine + H2O = L-glutamate + NH4(+). Its pathway is purine metabolism; IMP biosynthesis via de novo pathway; 5-amino-1-(5-phospho-D-ribosyl)imidazole from N(2)-formyl-N(1)-(5-phospho-D-ribosyl)glycinamide: step 1/2. Its function is as follows. Part of the phosphoribosylformylglycinamidine synthase complex involved in the purines biosynthetic pathway. Catalyzes the ATP-dependent conversion of formylglycinamide ribonucleotide (FGAR) and glutamine to yield formylglycinamidine ribonucleotide (FGAM) and glutamate. The FGAM synthase complex is composed of three subunits. PurQ produces an ammonia molecule by converting glutamine to glutamate. PurL transfers the ammonia molecule to FGAR to form FGAM in an ATP-dependent manner. PurS interacts with PurQ and PurL and is thought to assist in the transfer of the ammonia molecule from PurQ to PurL. The chain is Phosphoribosylformylglycinamidine synthase subunit PurQ from Staphylococcus saprophyticus subsp. saprophyticus (strain ATCC 15305 / DSM 20229 / NCIMB 8711 / NCTC 7292 / S-41).